An 82-amino-acid polypeptide reads, in one-letter code: Proline, histidine and glycine-rich protein 1 (82 aa).

The tract at residues 20 to 82 is disordered; that stretch reads HCGPPPGHGP…PGHPPPGPHH (63 aa).

The protein is Proline, histidine and glycine-rich protein 1 (PHGR1) of Homo sapiens (Human).